A 132-amino-acid polypeptide reads, in one-letter code: Small ribosomal subunit protein eS12 (132 aa).

The protein belongs to the eukaryotic ribosomal protein eS12 family.

The protein resides in the cytoplasm. This is Small ribosomal subunit protein eS12 (rps12) from Xenopus laevis (African clawed frog).